Consider the following 833-residue polypeptide: Glycerol-3-phosphate acyltransferase (833 aa).

The short motif at 309–314 (CHRSHI) is the HXXXXD motif element.

It belongs to the GPAT/DAPAT family.

The protein localises to the cell inner membrane. The catalysed reaction is sn-glycerol 3-phosphate + an acyl-CoA = a 1-acyl-sn-glycero-3-phosphate + CoA. Its pathway is phospholipid metabolism; CDP-diacylglycerol biosynthesis; CDP-diacylglycerol from sn-glycerol 3-phosphate: step 1/3. The polypeptide is Glycerol-3-phosphate acyltransferase (Pseudomonas syringae pv. syringae (strain B728a)).